Reading from the N-terminus, the 257-residue chain is NAD-capped RNA hydrolase NudC (257 aa).

Residue Arg69 participates in substrate binding. 2 residues coordinate Zn(2+): Cys98 and Cys101. Residue Glu111 coordinates substrate. The Zn(2+) site is built by Cys116 and Cys119. Tyr124 is a binding site for substrate. Residues 125–248 form the Nudix hydrolase domain; it reads PQIAPCIIVA…TVARRLIEDT (124 aa). The a divalent metal cation site is built by Ala158, Glu174, and Glu178. Residues 159 to 180 carry the Nudix box motif; sequence GFVEVGETLEQAVAREVMEESG. 192-199 is a binding site for substrate; that stretch reads QPWPFPQS. Glu219 contacts a divalent metal cation. Position 241 (Ala241) interacts with substrate.

Belongs to the Nudix hydrolase family. NudC subfamily. In terms of assembly, homodimer. Mg(2+) serves as cofactor. Requires Mn(2+) as cofactor. Zn(2+) is required as a cofactor.

It carries out the reaction a 5'-end NAD(+)-phospho-ribonucleoside in mRNA + H2O = a 5'-end phospho-adenosine-phospho-ribonucleoside in mRNA + beta-nicotinamide D-ribonucleotide + 2 H(+). The catalysed reaction is NAD(+) + H2O = beta-nicotinamide D-ribonucleotide + AMP + 2 H(+). It catalyses the reaction NADH + H2O = reduced beta-nicotinamide D-ribonucleotide + AMP + 2 H(+). MRNA decapping enzyme that specifically removes the nicotinamide adenine dinucleotide (NAD) cap from a subset of mRNAs by hydrolyzing the diphosphate linkage to produce nicotinamide mononucleotide (NMN) and 5' monophosphate mRNA. The NAD-cap is present at the 5'-end of some mRNAs and stabilizes RNA against 5'-processing. Has preference for mRNAs with a 5'-end purine. Catalyzes the hydrolysis of a broad range of dinucleotide pyrophosphates. The protein is NAD-capped RNA hydrolase NudC of Salmonella schwarzengrund (strain CVM19633).